Here is a 360-residue protein sequence, read N- to C-terminus: Phospho-N-acetylmuramoyl-pentapeptide-transferase (360 aa).

10 helical membrane-spanning segments follow: residues 27-47 (GAMI…INSL), 71-91 (TPTM…LLWA), 93-113 (LASV…AIGF), 128-148 (FSGK…AFTI), 168-188 (LVIN…VGAG), 199-219 (GLAI…AYLS), 239-259 (LAVV…FNAP), 262-282 (AIFM…TVAV), 288-308 (IVLA…IIQV), and 337-357 (QVVI…LSTL).

It belongs to the glycosyltransferase 4 family. MraY subfamily. Mg(2+) is required as a cofactor.

The protein resides in the cell inner membrane. It catalyses the reaction UDP-N-acetyl-alpha-D-muramoyl-L-alanyl-gamma-D-glutamyl-meso-2,6-diaminopimeloyl-D-alanyl-D-alanine + di-trans,octa-cis-undecaprenyl phosphate = di-trans,octa-cis-undecaprenyl diphospho-N-acetyl-alpha-D-muramoyl-L-alanyl-D-glutamyl-meso-2,6-diaminopimeloyl-D-alanyl-D-alanine + UMP. Its pathway is cell wall biogenesis; peptidoglycan biosynthesis. In terms of biological role, catalyzes the initial step of the lipid cycle reactions in the biosynthesis of the cell wall peptidoglycan: transfers peptidoglycan precursor phospho-MurNAc-pentapeptide from UDP-MurNAc-pentapeptide onto the lipid carrier undecaprenyl phosphate, yielding undecaprenyl-pyrophosphoryl-MurNAc-pentapeptide, known as lipid I. The chain is Phospho-N-acetylmuramoyl-pentapeptide-transferase from Brucella abortus (strain S19).